The chain runs to 1070 residues: DNA-directed RNA polymerase subunit beta (1070 aa).

Belongs to the RNA polymerase beta chain family. As to quaternary structure, in plastids the minimal PEP RNA polymerase catalytic core is composed of four subunits: alpha, beta, beta', and beta''. When a (nuclear-encoded) sigma factor is associated with the core the holoenzyme is formed, which can initiate transcription.

It localises to the plastid. The protein localises to the chloroplast. The catalysed reaction is RNA(n) + a ribonucleoside 5'-triphosphate = RNA(n+1) + diphosphate. In terms of biological role, DNA-dependent RNA polymerase catalyzes the transcription of DNA into RNA using the four ribonucleoside triphosphates as substrates. The protein is DNA-directed RNA polymerase subunit beta of Phaseolus vulgaris (Kidney bean).